We begin with the raw amino-acid sequence, 102 residues long: Urease subunit beta (102 aa).

It belongs to the urease beta subunit family. As to quaternary structure, heterotrimer of UreA (gamma), UreB (beta) and UreC (alpha) subunits. Three heterotrimers associate to form the active enzyme.

The protein localises to the cytoplasm. It catalyses the reaction urea + 2 H2O + H(+) = hydrogencarbonate + 2 NH4(+). It functions in the pathway nitrogen metabolism; urea degradation; CO(2) and NH(3) from urea (urease route): step 1/1. The polypeptide is Urease subunit beta (Acinetobacter baumannii (strain AB307-0294)).